Here is a 527-residue protein sequence, read N- to C-terminus: Coiled-coil domain-containing protein 148 (527 aa).

Coiled coils occupy residues 289–353 (LAKD…TEIK) and 401–438 (LEKR…VAVQ).

The sequence is that of Coiled-coil domain-containing protein 148 (Ccdc148) from Mus musculus (Mouse).